The following is a 191-amino-acid chain: RNA pyrophosphohydrolase (191 aa).

Positions 6–149 (GYRLNVGIIL…KREVYRQALS (144 aa)) constitute a Nudix hydrolase domain. The short motif at 38–59 (GGIKVDEDPDAAMFRELYEEVG) is the Nudix box element. Residues 162–191 (GAQAVSDAGGTATRQIPVATEPSGPSSSQR) are disordered.

The protein belongs to the Nudix hydrolase family. RppH subfamily. The cofactor is a divalent metal cation.

Accelerates the degradation of transcripts by removing pyrophosphate from the 5'-end of triphosphorylated RNA, leading to a more labile monophosphorylated state that can stimulate subsequent ribonuclease cleavage. The chain is RNA pyrophosphohydrolase from Methylococcus capsulatus (strain ATCC 33009 / NCIMB 11132 / Bath).